Reading from the N-terminus, the 334-residue chain is Fructose-1,6-bisphosphatase class 1 (334 aa).

Mg(2+) contacts are provided by E87, D106, L108, and D109. Residues 109–112 (DGSS), N208, and K274 contribute to the substrate site. E280 is a binding site for Mg(2+).

Belongs to the FBPase class 1 family. In terms of assembly, homotetramer. Requires Mg(2+) as cofactor.

The protein resides in the cytoplasm. The enzyme catalyses beta-D-fructose 1,6-bisphosphate + H2O = beta-D-fructose 6-phosphate + phosphate. The protein operates within carbohydrate biosynthesis; gluconeogenesis. The protein is Fructose-1,6-bisphosphatase class 1 of Psychrobacter sp. (strain PRwf-1).